We begin with the raw amino-acid sequence, 407 residues long: Bifunctional enzyme IspD/IspF (407 aa).

The tract at residues 1–247 (MVHIQADGAR…RLSHNALPDV (247 aa)) is 2-C-methyl-D-erythritol 4-phosphate cytidylyltransferase. The interval 248 to 407 (RTGNGYDVHQ…ATVVFQGKPQ (160 aa)) is 2-C-methyl-D-erythritol 2,4-cyclodiphosphate synthase. Positions 254 and 256 each coordinate a divalent metal cation. 4-CDP-2-C-methyl-D-erythritol 2-phosphate-binding positions include 254–256 (DVH) and 280–281 (HS). Residue His288 participates in a divalent metal cation binding. 4-CDP-2-C-methyl-D-erythritol 2-phosphate-binding positions include 302-304 (DIG), 378-381 (TTNE), Phe385, and Arg388.

In the N-terminal section; belongs to the IspD/TarI cytidylyltransferase family. IspD subfamily. This sequence in the C-terminal section; belongs to the IspF family. It depends on a divalent metal cation as a cofactor.

The catalysed reaction is 2-C-methyl-D-erythritol 4-phosphate + CTP + H(+) = 4-CDP-2-C-methyl-D-erythritol + diphosphate. It carries out the reaction 4-CDP-2-C-methyl-D-erythritol 2-phosphate = 2-C-methyl-D-erythritol 2,4-cyclic diphosphate + CMP. It functions in the pathway isoprenoid biosynthesis; isopentenyl diphosphate biosynthesis via DXP pathway; isopentenyl diphosphate from 1-deoxy-D-xylulose 5-phosphate: step 2/6. The protein operates within isoprenoid biosynthesis; isopentenyl diphosphate biosynthesis via DXP pathway; isopentenyl diphosphate from 1-deoxy-D-xylulose 5-phosphate: step 4/6. Bifunctional enzyme that catalyzes the formation of 4-diphosphocytidyl-2-C-methyl-D-erythritol from CTP and 2-C-methyl-D-erythritol 4-phosphate (MEP) (IspD), and catalyzes the conversion of 4-diphosphocytidyl-2-C-methyl-D-erythritol 2-phosphate (CDP-ME2P) to 2-C-methyl-D-erythritol 2,4-cyclodiphosphate (ME-CPP) with a corresponding release of cytidine 5-monophosphate (CMP) (IspF). The polypeptide is Bifunctional enzyme IspD/IspF (Allorhizobium ampelinum (strain ATCC BAA-846 / DSM 112012 / S4) (Agrobacterium vitis (strain S4))).